A 599-amino-acid polypeptide reads, in one-letter code: Adenine deaminase (599 aa).

It belongs to the metallo-dependent hydrolases superfamily. Adenine deaminase family. Requires Mn(2+) as cofactor.

The catalysed reaction is adenine + H2O + H(+) = hypoxanthine + NH4(+). The chain is Adenine deaminase from Clostridium botulinum (strain 657 / Type Ba4).